The primary structure comprises 277 residues: Diaminopimelate epimerase (277 aa).

2 residues coordinate substrate: Asn11 and Asn62. The Proton donor role is filled by Cys71. Residues 72-73, Asn160, Asn193, and 211-212 contribute to the substrate site; these read GN and ER. Catalysis depends on Cys220, which acts as the Proton acceptor. Substrate is bound at residue 221-222; sequence GT.

The protein belongs to the diaminopimelate epimerase family. In terms of assembly, homodimer.

Its subcellular location is the cytoplasm. The catalysed reaction is (2S,6S)-2,6-diaminopimelate = meso-2,6-diaminopimelate. It functions in the pathway amino-acid biosynthesis; L-lysine biosynthesis via DAP pathway; DL-2,6-diaminopimelate from LL-2,6-diaminopimelate: step 1/1. Catalyzes the stereoinversion of LL-2,6-diaminopimelate (L,L-DAP) to meso-diaminopimelate (meso-DAP), a precursor of L-lysine. The sequence is that of Diaminopimelate epimerase from Methanococcus maripaludis (strain DSM 14266 / JCM 13030 / NBRC 101832 / S2 / LL).